We begin with the raw amino-acid sequence, 196 residues long: Probable nicotinate-nucleotide adenylyltransferase (196 aa).

This sequence belongs to the NadD family.

It catalyses the reaction nicotinate beta-D-ribonucleotide + ATP + H(+) = deamido-NAD(+) + diphosphate. Its pathway is cofactor biosynthesis; NAD(+) biosynthesis; deamido-NAD(+) from nicotinate D-ribonucleotide: step 1/1. In terms of biological role, catalyzes the reversible adenylation of nicotinate mononucleotide (NaMN) to nicotinic acid adenine dinucleotide (NaAD). The protein is Probable nicotinate-nucleotide adenylyltransferase of Thermotoga sp. (strain RQ2).